Here is a 252-residue protein sequence, read N- to C-terminus: Probable transcriptional regulatory protein A1C_04175 (252 aa).

This sequence belongs to the TACO1 family.

Its subcellular location is the cytoplasm. The chain is Probable transcriptional regulatory protein A1C_04175 from Rickettsia akari (strain Hartford).